The chain runs to 452 residues: UPF0210 protein Daud_1353 (452 aa).

It belongs to the UPF0210 family. As to quaternary structure, homodimer.

This Desulforudis audaxviator (strain MP104C) protein is UPF0210 protein Daud_1353.